A 366-amino-acid chain; its full sequence is Mitogen-activated protein kinase sakA (366 aa).

Residues 20-299 (YTDLQPVGMG…AGEALAHEYL (280 aa)) form the Protein kinase domain. ATP contacts are provided by residues 26 to 34 (VGMGAFGLV) and Lys-49. The active-site Proton acceptor is the Asp-141. Thr-171 is modified (phosphothreonine). The TXY signature appears at 171 to 173 (TGY). Phosphotyrosine is present on Tyr-173.

It belongs to the protein kinase superfamily. Ser/Thr protein kinase family. MAP kinase subfamily. HOG1 sub-subfamily. As to quaternary structure, interacts with the AGC kinase ypkA. Interacts with sakA upon osmotic and cell wall stresses. Mg(2+) is required as a cofactor. Dually phosphorylated on Thr-171 and Tyr-173, which activates the enzyme. Environmental stresses such as high temperature, osmotic stress, cold stress or ethanol stress modulate the activation of sakA via phosphorylation.

The protein localises to the cytoplasm. The protein resides in the nucleus. It carries out the reaction L-seryl-[protein] + ATP = O-phospho-L-seryl-[protein] + ADP + H(+). The catalysed reaction is L-threonyl-[protein] + ATP = O-phospho-L-threonyl-[protein] + ADP + H(+). With respect to regulation, activated by tyrosine and threonine phosphorylation. Deactivated by protein phosphatase 2C homolog 2 ptcB. Functionally, proline-directed serine/threonine-protein kinase involved in a signal transduction pathway that is activated by changes in the osmolarity of the extracellular environment. Controls osmotic regulation of transcription of target genes. Involved in environmental stress response. With mpkC, plays a redundant or cooperative role in the conidial stress resistance. Also plays a supportive role in osmotic stress adaptation when sakA is deficient. Involved in paradoxical growth, the cell wall integrity (CWI) pathway and biofilm formation. Also collaborates with mpkC to allow ful virulence in a neutropenic murine model ofinvasive pulmonary aspergillosis. MpkC and sakA have both independent and collaborative functions during the transcriptional response to transient osmotic stress and sakA not only seems to modulate pathways involved in nucleotide, fatty acid, nitrogen and organic acid biosynthesis but is also important for the activation of genes involved in mitochondrial and endoplasmic reticulum functions. The sequence is that of Mitogen-activated protein kinase sakA from Aspergillus fumigatus (strain ATCC MYA-4609 / CBS 101355 / FGSC A1100 / Af293) (Neosartorya fumigata).